A 428-amino-acid polypeptide reads, in one-letter code: D-amino acid dehydrogenase (428 aa).

3-17 is a binding site for FAD; the sequence is VVILGSGVVGVASAY.

This sequence belongs to the DadA oxidoreductase family. FAD serves as cofactor.

It carries out the reaction a D-alpha-amino acid + A + H2O = a 2-oxocarboxylate + AH2 + NH4(+). It functions in the pathway amino-acid degradation; D-alanine degradation; NH(3) and pyruvate from D-alanine: step 1/1. In terms of biological role, oxidative deamination of D-amino acids. This chain is D-amino acid dehydrogenase, found in Burkholderia pseudomallei (strain K96243).